The following is a 90-amino-acid chain: Lectin-1 (90 aa).

Gln1 is subject to Pyrrolidone carboxylic acid. An intrachain disulfide couples Cys46 to Cys71.

Post-translationally, the N-terminus is blocked. In terms of processing, contains seven disulfide bonds. Proteolytically cleaved. Major form may consist of cleaved, disulfide-bonded subunits.

In terms of biological role, lectin with specificity for complex N-linked glycans and O-linked glycans. Has hemagglutinating activity towards rabbit erythrocytes that is inhibited by N-acetyl-D-galactosamine. This is Lectin-1 from Hypnea cervicornis (Brazilian red alga).